A 156-amino-acid polypeptide reads, in one-letter code: Small ribosomal subunit protein uS7 (156 aa).

The protein belongs to the universal ribosomal protein uS7 family. As to quaternary structure, part of the 30S ribosomal subunit. Contacts proteins S9 and S11.

Its function is as follows. One of the primary rRNA binding proteins, it binds directly to 16S rRNA where it nucleates assembly of the head domain of the 30S subunit. Is located at the subunit interface close to the decoding center, probably blocks exit of the E-site tRNA. The chain is Small ribosomal subunit protein uS7 from Prochlorococcus marinus (strain SARG / CCMP1375 / SS120).